The chain runs to 249 residues: Undecaprenyl-diphosphatase (249 aa).

Helical transmembrane passes span 11 to 31 (GLTEFLPVSSSGHLAIFTAIF), 35 to 55 (PDVGYFAFLHLATFLAVVIFV), 74 to 94 (ITLSLKLFVSMIPAAIVGIFF), 101 to 121 (IFSETFFIGVFLAITGVFMLL), 135 to 155 (IPYLDAFIIGIFQAFSVLPGI), 175 to 195 (AVKYSFLMSLPVIFGAGVLEM), 208 to 228 (FIVAFLTGILGLHLLKKMVIA), and 229 to 249 (GKLKFFGYYCFLASLFVIFYI).

This sequence belongs to the UppP family.

It is found in the cell membrane. The catalysed reaction is di-trans,octa-cis-undecaprenyl diphosphate + H2O = di-trans,octa-cis-undecaprenyl phosphate + phosphate + H(+). Functionally, catalyzes the dephosphorylation of undecaprenyl diphosphate (UPP). This is Undecaprenyl-diphosphatase from Methanococcus vannielii (strain ATCC 35089 / DSM 1224 / JCM 13029 / OCM 148 / SB).